We begin with the raw amino-acid sequence, 217 residues long: Guanylate kinase (217 aa).

In terms of domain architecture, Guanylate kinase-like spans 15 to 194 (GLMLVLSSPS…AYQRLKRILL (180 aa)). 22–29 (SPSGAGKT) serves as a coordination point for ATP.

It belongs to the guanylate kinase family.

It is found in the cytoplasm. The enzyme catalyses GMP + ATP = GDP + ADP. In terms of biological role, essential for recycling GMP and indirectly, cGMP. In Hyphomonas neptunium (strain ATCC 15444), this protein is Guanylate kinase.